Reading from the N-terminus, the 356-residue chain is MIPDEIKERAYQGTTTKEDALTLLEIEPFELFELADQIRAKAVGDNVTYIVNRNINFTDICIGTCGFCAFKDKKGYLLSIDQIKDKIKEAHVSGATEVCIQGGLLPNVKIDLYIDILKAVKSDYPHIHTHCFSPMEVNHAAKASGLSVEETLKTLKANGLNTMPGTAAEILVDKVRNIICPDKLTRQEWIDTVTLAHKLGIQTTATMMYGHVDTWEDRIEHILTIRRIQKDTGGFSEFVPLSFMPYNNPIGEKMMEEGRFMNTGIDDLKIYAIARILLNTHINNIQTSWVKLGKKLAQMALYCGANDMGGTLMEESISSSAGASSGEAISAEELEWIIRATDRKPVQRDTLYRSIR.

The Radical SAM core domain occupies 47–281 (VTYIVNRNIN…AIARILLNTH (235 aa)). Residues Cys-61, Cys-65, and Cys-68 each coordinate [4Fe-4S] cluster.

Belongs to the radical SAM superfamily. CofH family. Consists of two subunits, CofG and CofH. [4Fe-4S] cluster is required as a cofactor.

It carries out the reaction 5-amino-6-(D-ribitylamino)uracil + L-tyrosine + S-adenosyl-L-methionine = 5-amino-5-(4-hydroxybenzyl)-6-(D-ribitylimino)-5,6-dihydrouracil + 2-iminoacetate + 5'-deoxyadenosine + L-methionine + H(+). Its pathway is cofactor biosynthesis; coenzyme F0 biosynthesis. Its function is as follows. Catalyzes the radical-mediated synthesis of 5-amino-5-(4-hydroxybenzyl)-6-(D-ribitylimino)-5,6-dihydrouracil from 5-amino-6-(D-ribitylamino)uracil and L-tyrosine. This is 5-amino-6-(D-ribitylamino)uracil--L-tyrosine 4-hydroxyphenyl transferase from Methanococcoides burtonii (strain DSM 6242 / NBRC 107633 / OCM 468 / ACE-M).